The chain runs to 517 residues: E3 ubiquitin-protein ligase TRIM65 (517 aa).

Ala-2 carries the N-acetylalanine modification. The RING-type zinc-finger motif lies at Cys-12–Arg-51. Residues Ala-75–Arg-94 form a disordered region. The segment at Asp-90–Arg-137 adopts a B box-type zinc-finger fold. Positions 95, 98, 117, and 125 each coordinate Zn(2+). A coiled-coil region spans residues Ala-139 to Val-227. The residue at position 185 (Ser-185) is a Phosphoserine. Lys-206 participates in a covalent cross-link: (Microbial infection) Glycyl lysine isopeptide (Lys-Gly) (interchain with G-Cter in ubiquitin). A B30.2/SPRY domain is found at Ala-313 to Val-506.

The protein belongs to the TRIM/RBCC family. Homo-multimerizes. Interacts with ARRDC4.

It is found in the cytoplasm. The catalysed reaction is S-ubiquitinyl-[E2 ubiquitin-conjugating enzyme]-L-cysteine + [acceptor protein]-L-lysine = [E2 ubiquitin-conjugating enzyme]-L-cysteine + N(6)-ubiquitinyl-[acceptor protein]-L-lysine.. It functions in the pathway protein modification; protein ubiquitination. Its function is as follows. E3 ubiquitin ligase that plays a role in several processes including innate immnity, autophagy or inflammation. Negatively regulates miRNAs by modulating the ubiquitination and stability of TNRC6A, a protein involved in RNA-mediated gene silencing by both micro-RNAs (miRNAs) and short interfering RNAs. This ubiquitination results in the suppressed expression of miR-138-5p leading to increased autophagy. Upon enteroviral infection, promotes 'Lys-63'-mediated ubiquitination activation of IFIH1/MDA5 leading to innate signaling cascade. Mechanistically, selectively recognizes MDA5 filaments that occur on dsRNAs. Plays also a role in limitation of inflammation through different mechanisms. First, promotes 'Lys-48'-mediated ubiquitination of VCAM1 leading to its degradation and limitation of LPS-induced lung inflammation. In addition, negatively regulates inflammasome activation by promoting 'lys48'-linked ubiquitination of NLRP3 which is critical for the inhibition of NLRP3 inflammasome activation in resting macrophages. This Homo sapiens (Human) protein is E3 ubiquitin-protein ligase TRIM65 (TRIM65).